A 507-amino-acid polypeptide reads, in one-letter code: Histidine ammonia-lyase (507 aa).

Residues 141 to 143 constitute a cross-link (5-imidazolinone (Ala-Gly)); it reads ASG. The residue at position 142 (Ser142) is a 2,3-didehydroalanine (Ser).

The protein belongs to the PAL/histidase family. Contains an active site 4-methylidene-imidazol-5-one (MIO), which is formed autocatalytically by cyclization and dehydration of residues Ala-Ser-Gly.

The protein localises to the cytoplasm. It catalyses the reaction L-histidine = trans-urocanate + NH4(+). It functions in the pathway amino-acid degradation; L-histidine degradation into L-glutamate; N-formimidoyl-L-glutamate from L-histidine: step 1/3. This is Histidine ammonia-lyase from Paraburkholderia phytofirmans (strain DSM 17436 / LMG 22146 / PsJN) (Burkholderia phytofirmans).